Reading from the N-terminus, the 310-residue chain is MDKIFVDEAVNELQTIQDMLRWSVSRFSAANIWYGHGTDNPWDEAVQLVLPSLYLPLDIPEDMRTARLTSSEKHRIVERVIRRVNERIPVAYLTNKAWFCGHEFYVDERVLVPRSPIGELINNKFAGLISKQPQHILDMCTGSGCIAIACAYAFPEAEVDAVDISPDALAVAEQNIEEHGLIHNVIPIRSDLFRDLPKVQYDLIVTNPPYVDAEDMSDLPNEYRHEPELGLASGTDGLKLTRRILGNAADYLADDGVLICEVGNSMVHLMEQYPDVPFTWLEFDNGGDGVFMLTKEQLLAAREHFAIYKD.

The protein belongs to the protein N5-glutamine methyltransferase family. PrmB subfamily.

It carries out the reaction L-glutaminyl-[ribosomal protein uL3] + S-adenosyl-L-methionine = N(5)-methyl-L-glutaminyl-[ribosomal protein uL3] + S-adenosyl-L-homocysteine + H(+). Its function is as follows. Specifically methylates large ribosomal subunit protein uL3 on 'Gln-150'. The polypeptide is Ribosomal protein uL3 glutamine methyltransferase (Shigella dysenteriae serotype 1 (strain Sd197)).